We begin with the raw amino-acid sequence, 459 residues long: Putrescine aminotransferase (459 aa).

Pyridoxal 5'-phosphate-binding positions include Gly150–Thr151 and Gln274. An N6-(pyridoxal phosphate)lysine modification is found at Lys300. Thr332 lines the pyridoxal 5'-phosphate pocket.

It belongs to the class-III pyridoxal-phosphate-dependent aminotransferase family. Putrescine aminotransferase subfamily. The cofactor is pyridoxal 5'-phosphate.

It catalyses the reaction an alkane-alpha,omega-diamine + 2-oxoglutarate = an omega-aminoaldehyde + L-glutamate. It carries out the reaction putrescine + 2-oxoglutarate = 1-pyrroline + L-glutamate + H2O. The enzyme catalyses cadaverine + 2-oxoglutarate = 5-aminopentanal + L-glutamate. Its pathway is amine and polyamine degradation; putrescine degradation; 4-aminobutanal from putrescine (transaminase route): step 1/1. Its function is as follows. Catalyzes the aminotransferase reaction from putrescine to 2-oxoglutarate, leading to glutamate and 4-aminobutanal, which spontaneously cyclizes to form 1-pyrroline. This is the first step in one of two pathways for putrescine degradation, where putrescine is converted into 4-aminobutanoate (gamma-aminobutyrate or GABA) via 4-aminobutanal. Also functions as a cadaverine transaminase in a a L-lysine degradation pathway to succinate that proceeds via cadaverine, glutarate and L-2-hydroxyglutarate. In Escherichia coli O81 (strain ED1a), this protein is Putrescine aminotransferase.